The sequence spans 273 residues: Ribosomal RNA small subunit methyltransferase A (273 aa).

The S-adenosyl-L-methionine site is built by Asn-25, Leu-27, Gly-52, Glu-73, Asp-99, and Asn-118.

Belongs to the class I-like SAM-binding methyltransferase superfamily. rRNA adenine N(6)-methyltransferase family. RsmA subfamily.

The protein resides in the cytoplasm. It catalyses the reaction adenosine(1518)/adenosine(1519) in 16S rRNA + 4 S-adenosyl-L-methionine = N(6)-dimethyladenosine(1518)/N(6)-dimethyladenosine(1519) in 16S rRNA + 4 S-adenosyl-L-homocysteine + 4 H(+). Functionally, specifically dimethylates two adjacent adenosines (A1518 and A1519) in the loop of a conserved hairpin near the 3'-end of 16S rRNA in the 30S particle. May play a critical role in biogenesis of 30S subunits. In Novosphingobium aromaticivorans (strain ATCC 700278 / DSM 12444 / CCUG 56034 / CIP 105152 / NBRC 16084 / F199), this protein is Ribosomal RNA small subunit methyltransferase A.